A 164-amino-acid polypeptide reads, in one-letter code: MQRIALYPGSFDPVTNGHLDVVRQAVHLCDKLIVAVGVHHGKKPLFSTEERLAMAHEVFGPVASAAGCAFDASTYDNLTVTAAQQAGAILMIRGLRDGTDLDYEMQLAGMNQTMAPSIQTVFVPASVPVRPITASLVRQIAAMGGEISHFVPPSVVAPLKAKFA.

Ser10 lines the substrate pocket. ATP contacts are provided by residues 10–11 (SF) and His18. The substrate site is built by Lys42, Thr79, and Arg93. ATP contacts are provided by residues 94 to 96 (GLR), Glu104, and 129 to 135 (VRPITAS).

Belongs to the bacterial CoaD family. In terms of assembly, homohexamer. Mg(2+) serves as cofactor.

It is found in the cytoplasm. It carries out the reaction (R)-4'-phosphopantetheine + ATP + H(+) = 3'-dephospho-CoA + diphosphate. It functions in the pathway cofactor biosynthesis; coenzyme A biosynthesis; CoA from (R)-pantothenate: step 4/5. Functionally, reversibly transfers an adenylyl group from ATP to 4'-phosphopantetheine, yielding dephospho-CoA (dPCoA) and pyrophosphate. This is Phosphopantetheine adenylyltransferase from Bradyrhizobium sp. (strain ORS 278).